We begin with the raw amino-acid sequence, 325 residues long: L-lactate dehydrogenase (325 aa).

Residues valine 21, aspartate 42, lysine 47, tyrosine 73, and 87–88 (GA) contribute to the NAD(+) site. Substrate-binding positions include glutamine 90, arginine 96, and 128 to 131 (NPVD). NAD(+) is bound by residues 126-128 (ATN) and serine 151. 156–159 (DTAR) serves as a coordination point for substrate. The beta-D-fructose 1,6-bisphosphate site is built by arginine 161 and histidine 176. Histidine 183 functions as the Proton acceptor in the catalytic mechanism. Tyrosine 228 carries the phosphotyrosine modification. Residue threonine 237 coordinates substrate.

The protein belongs to the LDH/MDH superfamily. LDH family. In terms of assembly, homotetramer.

The protein localises to the cytoplasm. It catalyses the reaction (S)-lactate + NAD(+) = pyruvate + NADH + H(+). Its pathway is fermentation; pyruvate fermentation to lactate; (S)-lactate from pyruvate: step 1/1. Allosterically activated by fructose 1,6-bisphosphate (FBP). Its function is as follows. Catalyzes the conversion of lactate to pyruvate. This is L-lactate dehydrogenase from Shouchella clausii (strain KSM-K16) (Alkalihalobacillus clausii).